We begin with the raw amino-acid sequence, 171 residues long: Putative lipoprotein LppO (171 aa).

An N-terminal signal peptide occupies residues 1–28 (MTDPRHTVRIAVGATALGVSALGATLPA). C29 is lipidated: N-palmitoyl cysteine. C29 carries the S-diacylglycerol cysteine lipid modification.

Its subcellular location is the cell membrane. In Mycobacterium tuberculosis (strain CDC 1551 / Oshkosh), this protein is Putative lipoprotein LppO (lppO).